We begin with the raw amino-acid sequence, 909 residues long: Tubulin polyglutamylase TTLL7 (909 aa).

A TTL domain is found at 40-392; the sequence is NGAITANVVG…RASDKKKNLA (353 aa). Residues Lys-162, 168–169, 190–193, and 203–205 each bind ATP; these read MG, QEYL, and KFD. Residue Arg-229 participates in L-glutamate binding. 251–252 is an ATP binding site; that stretch reads TN. Residues Tyr-253, Ser-254, and Lys-273 each coordinate L-glutamate. Positions 338, 351, and 353 each coordinate Mg(2+). Position 369 (Lys-369) interacts with L-glutamate. The c-MTBD region stretch occupies residues 390–452; that stretch reads NLAKQKAEAQ…ISREEYENRH (63 aa). Disordered regions lie at residues 517–580 and 603–688; these read DEKL…KVSY and KAAR…PSIS. Residues 518 to 531 are compositionally biased toward basic and acidic residues; it reads EKLSGKPTRPKEPR. The span at 532–542 shows a compositional bias: polar residues; that stretch reads TLSSMPESTQT. The segment covering 548-562 has biased composition (low complexity); the sequence is NYSSHSSSNSTGSSS. A compositionally biased stretch (basic and acidic residues) spans 571–580; it reads KEGKEKKVSY. A compositionally biased stretch (low complexity) spans 604-625; the sequence is AARPFSNSSSPSSAASMRRSVS. A compositionally biased stretch (polar residues) spans 626–657; it reads CPRSITALNTQSPTTDQRPFSSRISSTITRPL. Over residues 658–673 the composition is skewed to low complexity; the sequence is SGNRTNSLNRSSSSNR. Residues 674–688 show a composition bias toward polar residues; the sequence is VPQSGTSGSVYPSIS.

Belongs to the tubulin--tyrosine ligase family. As to quaternary structure, interacts with both alpha- and beta-tubulin (via C-terminal tubulin tails). The cofactor is Mg(2+).

It is found in the cell projection. Its subcellular location is the cilium. The protein localises to the cytoplasm. The protein resides in the cytoskeleton. It localises to the cilium basal body. It is found in the dendrite. Its subcellular location is the perikaryon. It carries out the reaction L-glutamyl-[protein] + L-glutamate + ATP = gamma-L-glutamyl-L-glutamyl-[protein] + ADP + phosphate + H(+). The enzyme catalyses (L-glutamyl)(n)-gamma-L-glutamyl-L-glutamyl-[protein] + L-glutamate + ATP = (L-glutamyl)(n+1)-gamma-L-glutamyl-L-glutamyl-[protein] + ADP + phosphate + H(+). Functionally, polyglutamylase which modifies tubulin, generating polyglutamate side chains of variable lengths on the gamma-carboxyl group of specific glutamate residues within the C-terminal tail of tubulin. Mediates both ATP-dependent initiation and elongation steps of the polyglutamylation reaction. Preferentially modifies the beta-tubulin tail over an alpha-tail. Competes with monoglycylase TTLL3 for modification site on beta-tubulin substrate, thereby creating an anticorrelation between glycylation and glutamylation reactions. In Xenopus tropicalis (Western clawed frog), this protein is Tubulin polyglutamylase TTLL7.